Here is a 325-residue protein sequence, read N- to C-terminus: Phospholipid phosphatase-related protein type 1 (325 aa).

N-linked (GlcNAc...) asparagine glycosylation occurs at Asn-5. A run of 3 helical transmembrane segments spans residues 13-33 (IIPC…LLAY), 67-87 (FISP…IIFI), and 127-147 (FIGV…AGQV). N-linked (GlcNAc...) asparagine glycosylation occurs at Asn-163. The next 3 helical transmembrane spans lie at 201-219 (AALS…TSTI), 226-244 (LAKP…LTGL), and 257-277 (VIAG…CVVH). Ser-307 is modified (phosphoserine). An N-linked (GlcNAc...) asparagine glycan is attached at Asn-316.

The protein belongs to the PA-phosphatase related phosphoesterase family. Highly expressed in the brain. Also found in the liver, kidney and testis. In the brain shows a strongest expression in the hippocampus and cerebellum.

It is found in the cell membrane. It localises to the cell projection. Its subcellular location is the neuron projection. In terms of biological role, may play a role in neurite outgrowth and neurogenesis. This chain is Phospholipid phosphatase-related protein type 1, found in Rattus norvegicus (Rat).